The following is a 427-amino-acid chain: Nuclear distribution protein PAC1-2 (427 aa).

One can recognise a LisH domain in the interval 8-40; that stretch reads QKDDLNKSIAEYLYAQDLTEIADSLCARLSLDY. Residues 58–82 adopt a coiled-coil conformation; the sequence is SVIRLQKKLIESENRYTALQEDIAA. WD repeat units lie at residues 106–147, 149–187, 194–233, 236–275, 278–336, 339–378, and 381–420; these read SHRA…RTLK, HTRE…NAGY, GHEH…CIRT, GHED…MKME, GHGH…ELRT, GHND…CMXV, and AHSH…SRIM.

The protein belongs to the WD repeat LIS1/nudF family. As to quaternary structure, self-associates. Interacts with NDL1 and dynein.

The protein resides in the cytoplasm. The protein localises to the cytoskeleton. It localises to the spindle pole. In terms of biological role, positively regulates the activity of the minus-end directed microtubule motor protein dynein. May enhance dynein-mediated microtubule sliding by targeting dynein to the microtubule plus end. Required for nuclear migration during vegetative growth as well as development. Required for retrograde early endosome (EE) transport from the hyphal tip. Required for localization of dynein to the mitotic spindle poles. Recruits additional proteins to the dynein complex at SPBs. The polypeptide is Nuclear distribution protein PAC1-2 (Postia placenta (strain ATCC 44394 / Madison 698-R) (Brown rot fungus)).